The following is a 473-amino-acid chain: Trigger factor (473 aa).

The region spanning 174–261 (GDIAVVSFKG…LKDLKEKELP (88 aa)) is the PPIase FKBP-type domain. Positions 442–473 (ATKLTTKTTTKATTKKGVKTKSKPKVNKKEKN) are disordered. Residues 444-453 (KLTTKTTTKA) are compositionally biased toward low complexity. The span at 454–467 (TTKKGVKTKSKPKV) shows a compositional bias: basic residues.

It belongs to the FKBP-type PPIase family. Tig subfamily.

Its subcellular location is the cytoplasm. The enzyme catalyses [protein]-peptidylproline (omega=180) = [protein]-peptidylproline (omega=0). Involved in protein export. Acts as a chaperone by maintaining the newly synthesized protein in an open conformation. Functions as a peptidyl-prolyl cis-trans isomerase. This is Trigger factor from Prochlorococcus marinus subsp. pastoris (strain CCMP1986 / NIES-2087 / MED4).